We begin with the raw amino-acid sequence, 272 residues long: Tryptophan synthase alpha chain (272 aa).

Active-site proton acceptor residues include E49 and D60.

This sequence belongs to the TrpA family. As to quaternary structure, tetramer of two alpha and two beta chains.

The enzyme catalyses (1S,2R)-1-C-(indol-3-yl)glycerol 3-phosphate + L-serine = D-glyceraldehyde 3-phosphate + L-tryptophan + H2O. The protein operates within amino-acid biosynthesis; L-tryptophan biosynthesis; L-tryptophan from chorismate: step 5/5. Its function is as follows. The alpha subunit is responsible for the aldol cleavage of indoleglycerol phosphate to indole and glyceraldehyde 3-phosphate. This is Tryptophan synthase alpha chain from Polaromonas naphthalenivorans (strain CJ2).